We begin with the raw amino-acid sequence, 288 residues long: uncharacterized protein (288 aa).

Positions 1-12 are enriched in basic and acidic residues; that stretch reads MTEGRCAQHPDG. Positions 1–20 are disordered; the sequence is MTEGRCAQHPDGLDVQDVCD.

Belongs to the class IV-like SAM-binding methyltransferase superfamily. RNA methyltransferase TrmH family.

This is an uncharacterized protein from Mycobacterium tuberculosis (strain ATCC 25618 / H37Rv).